The sequence spans 252 residues: Imidazole glycerol phosphate synthase subunit HisF (252 aa).

Residues Asp11 and Asp130 contribute to the active site.

This sequence belongs to the HisA/HisF family. As to quaternary structure, heterodimer of HisH and HisF.

It localises to the cytoplasm. It carries out the reaction 5-[(5-phospho-1-deoxy-D-ribulos-1-ylimino)methylamino]-1-(5-phospho-beta-D-ribosyl)imidazole-4-carboxamide + L-glutamine = D-erythro-1-(imidazol-4-yl)glycerol 3-phosphate + 5-amino-1-(5-phospho-beta-D-ribosyl)imidazole-4-carboxamide + L-glutamate + H(+). It participates in amino-acid biosynthesis; L-histidine biosynthesis; L-histidine from 5-phospho-alpha-D-ribose 1-diphosphate: step 5/9. Its function is as follows. IGPS catalyzes the conversion of PRFAR and glutamine to IGP, AICAR and glutamate. The HisF subunit catalyzes the cyclization activity that produces IGP and AICAR from PRFAR using the ammonia provided by the HisH subunit. The chain is Imidazole glycerol phosphate synthase subunit HisF from Azobacteroides pseudotrichonymphae genomovar. CFP2.